A 288-amino-acid chain; its full sequence is UPF0761 membrane protein HSM_1104 (288 aa).

The next 6 helical transmembrane spans lie at threonine 36–phenylalanine 56, glutamine 92–isoleucine 112, proline 127–alanine 147, leucine 176–valine 196, lysine 200–glycine 220, and alanine 240–leucine 260.

Belongs to the UPF0761 family.

The protein resides in the cell inner membrane. The chain is UPF0761 membrane protein HSM_1104 from Histophilus somni (strain 2336) (Haemophilus somnus).